The primary structure comprises 188 residues: MPVADTSQLTSGVAERYASSLFELALEHGAVDSVTADLDRFQAMLDESAELKRFVASPVFSAEDQLKAIVAISERAGISGFFANFLKVVARNRRLFALPGMIRAFRLIAANHRGEISAEVISAHALSQAQETELKAALKSVTGKDVTISVTVDPSILGGLIVKVGSRQIDTSLRTKLSTLKLALKEVG.

Belongs to the ATPase delta chain family. As to quaternary structure, F-type ATPases have 2 components, F(1) - the catalytic core - and F(0) - the membrane proton channel. F(1) has five subunits: alpha(3), beta(3), gamma(1), delta(1), epsilon(1). F(0) has three main subunits: a(1), b(2) and c(10-14). The alpha and beta chains form an alternating ring which encloses part of the gamma chain. F(1) is attached to F(0) by a central stalk formed by the gamma and epsilon chains, while a peripheral stalk is formed by the delta and b chains.

Its subcellular location is the cell inner membrane. In terms of biological role, f(1)F(0) ATP synthase produces ATP from ADP in the presence of a proton or sodium gradient. F-type ATPases consist of two structural domains, F(1) containing the extramembraneous catalytic core and F(0) containing the membrane proton channel, linked together by a central stalk and a peripheral stalk. During catalysis, ATP synthesis in the catalytic domain of F(1) is coupled via a rotary mechanism of the central stalk subunits to proton translocation. Its function is as follows. This protein is part of the stalk that links CF(0) to CF(1). It either transmits conformational changes from CF(0) to CF(1) or is implicated in proton conduction. The sequence is that of ATP synthase subunit delta from Rhizobium etli (strain CIAT 652).